Here is a 125-residue protein sequence, read N- to C-terminus: Large ribosomal subunit protein bL12 (125 aa).

This sequence belongs to the bacterial ribosomal protein bL12 family. Homodimer. Part of the ribosomal stalk of the 50S ribosomal subunit. Forms a multimeric L10(L12)X complex, where L10 forms an elongated spine to which 2 to 4 L12 dimers bind in a sequential fashion. Binds GTP-bound translation factors.

Forms part of the ribosomal stalk which helps the ribosome interact with GTP-bound translation factors. Is thus essential for accurate translation. In Delftia acidovorans (strain DSM 14801 / SPH-1), this protein is Large ribosomal subunit protein bL12.